A 211-amino-acid polypeptide reads, in one-letter code: Probable metallo-hydrolase YqgX (211 aa).

Histidine 54, histidine 56, aspartate 58, histidine 59, histidine 130, aspartate 149, and histidine 190 together coordinate Zn(2+).

This sequence belongs to the metallo-beta-lactamase superfamily. Glyoxalase II family. The cofactor is Zn(2+).

This is Probable metallo-hydrolase YqgX (yqgX) from Bacillus subtilis (strain 168).